The following is a 274-amino-acid chain: 3-methyl-2-oxobutanoate hydroxymethyltransferase (274 aa).

Residues Asp44 and Asp83 each contribute to the Mg(2+) site. Residues 44-45, Asp83, and Lys113 each bind 3-methyl-2-oxobutanoate; that span reads DS. Glu115 is a binding site for Mg(2+). Catalysis depends on Glu182, which acts as the Proton acceptor.

The protein belongs to the PanB family. As to quaternary structure, homodecamer; pentamer of dimers. Requires Mg(2+) as cofactor.

It localises to the cytoplasm. It catalyses the reaction 3-methyl-2-oxobutanoate + (6R)-5,10-methylene-5,6,7,8-tetrahydrofolate + H2O = 2-dehydropantoate + (6S)-5,6,7,8-tetrahydrofolate. Its pathway is cofactor biosynthesis; (R)-pantothenate biosynthesis; (R)-pantoate from 3-methyl-2-oxobutanoate: step 1/2. Catalyzes the reversible reaction in which hydroxymethyl group from 5,10-methylenetetrahydrofolate is transferred onto alpha-ketoisovalerate to form ketopantoate. The protein is 3-methyl-2-oxobutanoate hydroxymethyltransferase of Campylobacter jejuni subsp. jejuni serotype O:23/36 (strain 81-176).